Here is a 252-residue protein sequence, read N- to C-terminus: MLTVQSIPAFNDNYIWLIHNSHNHCVVVDPGDATPVLKVLEEQSLTLDAILITHHHHDHIGGISELKRHYPNLNVVGPASEPIPGISQSVEDGDQVELFGERFMVLGVPGHTLGHVAYVGDGKLFCGDTLFSVGCGRLFEGTPAQMFQSLKKLAALPDETEIYCAHEYTSSNLAFALVAEQDNPHLQRYREDVSRMRAQGISTIPSTLRQEKLVNPFLRCEQPSIKKSVADKAFDDSDLETFAALRRWKDNF.

7 residues coordinate Zn(2+): H54, H56, D58, H59, H111, D128, and H166.

It belongs to the metallo-beta-lactamase superfamily. Glyoxalase II family. As to quaternary structure, monomer. Zn(2+) is required as a cofactor.

The catalysed reaction is an S-(2-hydroxyacyl)glutathione + H2O = a 2-hydroxy carboxylate + glutathione + H(+). Its pathway is secondary metabolite metabolism; methylglyoxal degradation; (R)-lactate from methylglyoxal: step 2/2. Its function is as follows. Thiolesterase that catalyzes the hydrolysis of S-D-lactoyl-glutathione to form glutathione and D-lactic acid. The polypeptide is Hydroxyacylglutathione hydrolase (Photobacterium profundum (strain SS9)).